A 1095-amino-acid chain; its full sequence is Inactive phospholipase C-like protein 1 (1095 aa).

Basic and acidic residues predominate over residues 1 to 11 (MAEGAAGREDP). Residues 1–61 (MAEGAAGRED…PGAAGTPADS (61 aa)) are disordered. Serine 47 and serine 77 each carry phosphoserine. An interaction with PPP1C region spans residues 83-222 (SNQKCGGRKK…IWVSGLRYLV (140 aa)). Threonine 93 carries the phosphothreonine; by PKA modification. Position 95 is a phosphoserine (serine 95). The 111-residue stretch at 113 to 223 (SFMQAGCELK…WVSGLRYLVS (111 aa)) folds into the PH domain. In terms of domain architecture, PI-PLC X-box spans 398–542 (QDMTQPLSHY…LKRMIIVKGK (145 aa)). The tract at residues 543–567 (KLPSDPDVLEGEVTDEDEEAEMSRR) is interaction with GABA A beta subunit. Threonine 556 carries the phosphothreonine modification. The residue at position 569 (serine 569) is a Phosphoserine. In terms of domain architecture, PI-PLC Y-box spans 585 to 701 (LSDLVSICKS…GYVLRPSIMR (117 aa)). Residues 701–830 (RDEVSYFSAN…PGYRHVPLRS (130 aa)) form the C2 domain. Coiled-coil stretches lie at residues 894–914 (LREA…IKEL) and 1034–1059 (LKGQ…QLAC). The disordered stretch occupies residues 1066-1095 (KAPSSSAEAKSKRSLEAIEEKESSEENGKL). Residues 1074–1095 (AKSKRSLEAIEEKESSEENGKL) show a composition bias toward basic and acidic residues. Serine 1079 is subject to Phosphoserine.

In terms of assembly, interacts with PPP2CA. Interacts with Ins(1,4,5)P3, Ins(1,4,5,6)P4, GABARAP, GABA receptor beta subunits, GABA receptor gamma-2 subunits and PPP1C. May form a ternary complex with GABA receptor beta subunit and GABARAP. The formation of a ternary complex with GABA receptor beta subunit and GABARAP could be the key step for facilitating the association of GABARAP with the GABA receptor gamma-2 subunit and to allow it to be transported at the right destination. In terms of processing, phosphorylated by the catalytic subunit of PKA. Phosphorylation of Thr-93 resulted in dissociation of PPP1C from PRIP1. As to expression, expressed in a variety of fetal and adult organs including brain, lung and kidney. Its expression was greatly reduced in small and non-small cell lung carcinoma. Isoform 1 is predominantly expressed in brain.

The protein resides in the cytoplasm. In terms of biological role, involved in an inositol phospholipid-based intracellular signaling cascade. Shows no PLC activity to phosphatidylinositol 4,5-bisphosphate and phosphatidylinositol. Component in the phospho-dependent endocytosis process of GABA A receptor. Regulates the turnover of receptors and thus contributes to the maintenance of GABA-mediated synaptic inhibition. Its aberrant expression could contribute to the genesis and progression of lung carcinoma. Acts as an inhibitor of PPP1C. This Homo sapiens (Human) protein is Inactive phospholipase C-like protein 1 (PLCL1).